The primary structure comprises 691 residues: Elongation factor G (691 aa).

The 275-residue stretch at 8 to 282 (ERVRNIGIAA…AVVDYLPAPV (275 aa)) folds into the tr-type G domain. Residues 17 to 24 (AHIDAGKT), 81 to 85 (DTPGH), and 135 to 138 (NKMD) contribute to the GTP site.

It belongs to the TRAFAC class translation factor GTPase superfamily. Classic translation factor GTPase family. EF-G/EF-2 subfamily.

The protein localises to the cytoplasm. Its function is as follows. Catalyzes the GTP-dependent ribosomal translocation step during translation elongation. During this step, the ribosome changes from the pre-translocational (PRE) to the post-translocational (POST) state as the newly formed A-site-bound peptidyl-tRNA and P-site-bound deacylated tRNA move to the P and E sites, respectively. Catalyzes the coordinated movement of the two tRNA molecules, the mRNA and conformational changes in the ribosome. The chain is Elongation factor G from Prochlorococcus marinus (strain MIT 9313).